A 303-amino-acid polypeptide reads, in one-letter code: Coenzyme PQQ synthesis protein B (303 aa).

It belongs to the PqqB family.

It functions in the pathway cofactor biosynthesis; pyrroloquinoline quinone biosynthesis. Its function is as follows. May be involved in the transport of PQQ or its precursor to the periplasm. The sequence is that of Coenzyme PQQ synthesis protein B from Rhizobium meliloti (strain 1021) (Ensifer meliloti).